We begin with the raw amino-acid sequence, 270 residues long: Short chain dehydrogenase/reductase dpfgG (270 aa).

Positions 18, 69, 96, 130, 171, 200, and 204 each coordinate NADP(+). The Lowers pKa of active site Tyr role is filled by K171.

The protein belongs to the short-chain dehydrogenases/reductases (SDR) family.

It participates in secondary metabolite biosynthesis; terpenoid biosynthesis. Functionally, short chain dehydrogenase/reductase; part of the gene cluster that mediates the biosynthesis of diterpenoid pyrones. The first step of the pathway is the synthesis of the alpha-pyrone moiety by the polyketide synthase dpfgA via condensation of one acetyl-CoA starter unit with 3 malonyl-CoA units and 2 methylations. The alpha-pyrone is then combined with geranylgeranyl pyrophosphate (GGPP) formed by the GGPP synthase dpfgD through the action of the prenyltransferase dpfgC to yield a linear alpha-pyrone diterpenoid. Subsequent steps in the diterpenoid pyrone biosynthetic pathway involve the decalin core formation, which is initiated by the epoxidation of the C10-C11 olefin by the FAD-dependent oxidoreductase dpfgE, and is followed by a cyclization cascade catalyzed by the terpene cyclase dpfgB. The short chain dehydrogenase/reductase dpfgG then oxidizes the 8S hydroxy group to a ketone and the short chain dehydrogenase/reductase dpfgH reduces the ketone to the 8R hydroxy group to yield higginsianin B. Higginsianin B is further methylated by the methyltransferase dpfgI to produce the intermediate named FDDP B. The cytochrome P450 monooxygenase dfgpJ then catalyzes a three-step oxidation at C-27 to generate a carboxylic acid as well as C-26 hydroxylation. Finally, methyltransferase dpfgK methylates the carboxylic acid generated by dpfgJ, yielding the final diterpenoid pyrones from the pathway which were named FDDP D and FDDP E. The protein is Short chain dehydrogenase/reductase dpfgG of Gibberella zeae (strain ATCC MYA-4620 / CBS 123657 / FGSC 9075 / NRRL 31084 / PH-1) (Wheat head blight fungus).